The primary structure comprises 670 residues: MTKFQEMVTFKDVAVVFTREELGLLDLAQRKLYQDVMLENFRNLLSVGYQPFKLDVILQLGKEDKLRMMETEIQGDGCSGHKNQNEIDTLQEVRLRFLSYEDLICWQIWEQFTSKLTSNQDLIINLQGKRSKLLKQGDSPCQVWTGESSQVSEDENYVIKLQGESSNSIKNQELPLRTTWDFWRKMYLREPQNYQSRCQQIDVKNKLCKCDHCVRQRIAHQHDDHGVHKREKAFSHNNCGKDCVKESSQHSIIQSGEQTSDENGKGLSVGSNLELHQQLHLRDKPHVNVEYGKGIGYSSGLPRHQCFHIGEKCYRNGDSGEGFSQGSHLQPHQRVSTGENLYRCQVYARSSNQNSCLPSHELTHPGEKLCTCGRCGKGFHHSLDFDIHCVDSAGERACKCDVYDKGFSQTSQLQAHQRGHSRDKTYKWEVSDRIFNRNSGLHQRVHTGEKPYKCEVCDKGFSKASNLQAHQRIHTGEKPYKCDVCDKNFSRNSHLQAHQRVHTGEKPYKCDTCGKDFSQISHLQAHQRVHKGEKPYKCETCGKGFSQSSHLQDHQQVHTGENPYKCDVCGKGFSWSSHLQAHQRVHTGEKPYKCEECRKGFIWNSYLHVHQRIHTGEKPYKCGMCGKSFSQTSHLQAHQRVHTGEKPYKCFVCGKGFSKSSLSSDSSESP.

The KRAB domain occupies 8–79; the sequence is VTFKDVAVVF…ETEIQGDGCS (72 aa). A C2H2-type 1; degenerate zinc finger spans residues 258–280; it reads QTSDENGKGLSVGSNLELHQQLH. The C2H2-type 2; degenerate zinc-finger motif lies at 311-336; it reads EKCYRNGDSGEGFSQGSHLQPHQRVS. A C2H2-type 3; degenerate zinc finger spans residues 342–364; sequence YRCQVYARSSNQNSCLPSHELTH. Residues 370 to 392 form a C2H2-type 4; degenerate zinc finger; it reads CTCGRCGKGFHHSLDFDIHCVDS. The C2H2-type 5; degenerate zinc-finger motif lies at 398 to 420; sequence CKCDVYDKGFSQTSQLQAHQRGH. C2H2-type zinc fingers lie at residues 452-474, 480-502, 508-530, 536-558, 564-586, 592-614, and 620-642; these read YKCE…QRIH, YKCD…QRVH, YKCE…QQVH, and YKCG…QRVH.

This sequence belongs to the krueppel C2H2-type zinc-finger protein family.

Its subcellular location is the nucleus. Functionally, may be involved in transcriptional regulation. This Homo sapiens (Human) protein is Zinc finger protein 233 (ZNF233).